Here is a 238-residue protein sequence, read N- to C-terminus: MGKHAENGNAAAERPRFFGRRQGKALRRNALGLIEDLLPRLTVAVPEPDERVEPALLFPGAVRSVWLEVGFGGGEHLAQLAEDNPDIGLIGCEVFRNGIASLLGHVQARQLGNNVRVFPEDVRLLLPALPDGSLGRVFVLFPDPWPKTRHADRRFISPETLDVLARVLESGGELRVASDDPIYVAWAARHLDAHPAFEKILATADRSAVPADWPATRYEQKCITGRAPVFFLYRRRAR.

The S-adenosyl-L-methionine site is built by Glu68, Glu93, Asp121, and Asp143. Asp143 is a catalytic residue. Substrate is bound by residues Lys147, Asp179, and 216–219 (TRYE).

It belongs to the class I-like SAM-binding methyltransferase superfamily. TrmB family.

It catalyses the reaction guanosine(46) in tRNA + S-adenosyl-L-methionine = N(7)-methylguanosine(46) in tRNA + S-adenosyl-L-homocysteine. Its pathway is tRNA modification; N(7)-methylguanine-tRNA biosynthesis. Catalyzes the formation of N(7)-methylguanine at position 46 (m7G46) in tRNA. The sequence is that of tRNA (guanine-N(7)-)-methyltransferase from Paramagnetospirillum magneticum (strain ATCC 700264 / AMB-1) (Magnetospirillum magneticum).